A 2373-amino-acid polypeptide reads, in one-letter code: Highly reducing polyketide synthase (2373 aa).

A Ketosynthase family 3 (KS3) domain is found at 19–446 (QEPIAVVGIA…GSNAHVIVEE (428 aa)). Catalysis depends on for beta-ketoacyl synthase activity residues cysteine 192, histidine 329, and histidine 369. The interval 560–874 (IFTGQGAQWP…QYTSAMARGA (315 aa)) is malonyl-CoA:ACP transacylase (MAT) domain. Serine 652 serves as the catalytic For malonyltransferase activity. Residues 942-1078 (HDLLGSKVLG…GLIRIDEDVP (137 aa)) form an N-terminal hotdog fold region. The dehydratase (DH) domain stretch occupies residues 942–1241 (HDLLGSKVLG…LSGLRYTRID (300 aa)). The PKS/mFAS DH domain occupies 942 to 1246 (HDLLGSKVLG…YTRIDTGPSV (305 aa)). Histidine 974 serves as the catalytic Proton acceptor; for dehydratase activity. Positions 1090–1246 (SHQVDASLWH…YTRIDTGPSV (157 aa)) are C-terminal hotdog fold. Catalysis depends on aspartate 1154, which acts as the Proton donor; for dehydratase activity. The interval 1669-1985 (GTTDSLIYSE…SANHIGKIVI (317 aa)) is enoyl reductase (ER) domain. The ketoreductase (KR) domain stretch occupies residues 2010 to 2187 (GYLLIGGLKG…NSVDLGAIQD (178 aa)). Residues 2294–2370 (AIHDAVIDVT…QLAQKIVARL (77 aa)) form the Carrier domain. Serine 2330 carries the O-(pantetheine 4'-phosphoryl)serine modification.

It depends on pantetheine 4'-phosphate as a cofactor.

It functions in the pathway mycotoxin biosynthesis. In terms of biological role, highly reducing polyketide synthase; part of the gene cluster that mediates the biosynthesis of brefeldin A (BFA), a protein transport inhibitor that shows antiviral, antifungal, and antitumor properties. The proposed biosynthesis of BFA involves formation of an acyclic polyketide chain that is differentially tailored throughout the backbone. The highly reducing polyketide synthase Bref-PKS is proposed to synthesize the precisely reduced octaketide precursor, which could then be directly offloaded by the thiohydrolase enzyme Bref-TH followed by a cytochrome P450 monooxygenase-mediated formation of the cyclopentane ring and macrocyclization to afford 7-deoxy BFA. Alternatively, the first ring annulation can also occur on the ACP-tethered intermediate before the thiohydrolase release and lactonization. The C7-hydroxylation by another cytochrome P450 monooxygenase is believed to be the final step in the process to obtain the final structure of BFA. In addition to the HRPKS Bref-PKS and the thiohydrolase Bref-TH, the brefeldin A biosynthesis cluster contains 4 cytochrome p450 monooxygenases (called orf3 to orf6), as well a the probable cluster-specific transcription regulator orf8. The chain is Highly reducing polyketide synthase from Eupenicillium brefeldianum (Penicillium brefeldianum).